The following is a 395-amino-acid chain: S-adenosylmethionine synthase (395 aa).

Residue H15 coordinates ATP. Mg(2+) is bound at residue D17. Position 43 (E43) interacts with K(+). L-methionine contacts are provided by E56 and Q99. Residues 99–109 form a flexible loop region; the sequence is QSPDIAMGVDE. Residues 173-175, 239-240, D248, 254-255, A271, and K275 each bind ATP; these read DGK, RF, and RK. D248 contacts L-methionine. K279 contributes to the L-methionine binding site.

The protein belongs to the AdoMet synthase family. Homotetramer; dimer of dimers. It depends on Mg(2+) as a cofactor. Requires K(+) as cofactor.

Its subcellular location is the cytoplasm. It carries out the reaction L-methionine + ATP + H2O = S-adenosyl-L-methionine + phosphate + diphosphate. Its pathway is amino-acid biosynthesis; S-adenosyl-L-methionine biosynthesis; S-adenosyl-L-methionine from L-methionine: step 1/1. Its function is as follows. Catalyzes the formation of S-adenosylmethionine (AdoMet) from methionine and ATP. The overall synthetic reaction is composed of two sequential steps, AdoMet formation and the subsequent tripolyphosphate hydrolysis which occurs prior to release of AdoMet from the enzyme. In Desulforudis audaxviator (strain MP104C), this protein is S-adenosylmethionine synthase.